Here is a 499-residue protein sequence, read N- to C-terminus: Lysine--tRNA ligase (499 aa).

Glu-408 and Glu-415 together coordinate Mg(2+).

Belongs to the class-II aminoacyl-tRNA synthetase family. As to quaternary structure, homodimer. It depends on Mg(2+) as a cofactor.

It localises to the cytoplasm. It carries out the reaction tRNA(Lys) + L-lysine + ATP = L-lysyl-tRNA(Lys) + AMP + diphosphate. This is Lysine--tRNA ligase from Bacillus cereus (strain B4264).